Consider the following 427-residue polypeptide: MESLTLQPIARVDGTINLPGSKSVSNRALLLAALAHGKTVLTNLLDSDDVRHMLNALAALGVSYTLSADRTRCEIIGNGGPLHAEGALELFLGNAGTAMRPLAAALCLGSNDIVLTGEPRMKERPIGHLVDALRLGGAKITYLEQENYPPLRLQGGFTGGNVEVDGSVSSQFLTALLMTAPLAPEDTVIRIKGDLVSKPYIDITLNLMKTFGVEIENQHYQQFVVKGGQSYQSPGTYLVEGDASSASYFLAAAAIKGGTVKVTGIGRNSMQGDIRFADVLEKMGATICWGDDYISCTRGELNAIDMDMNHIPDAAMTIATAALFAKGTTTLRNIYNWRVKETDRLFAMATELRKVGAEVEEGHDYIRITPPEKLNFAEIATYNDHRMAMCFSLVALSDTAVTILDPKCTAKTFPDYFEQLARISQPG.

Residues lysine 22, serine 23, and arginine 27 each contribute to the 3-phosphoshikimate site. Lysine 22 serves as a coordination point for phosphoenolpyruvate. The phosphoenolpyruvate site is built by glycine 96 and arginine 124. The 3-phosphoshikimate site is built by serine 169, serine 170, glutamine 171, serine 197, aspartate 313, asparagine 336, and lysine 340. Glutamine 171 is a binding site for phosphoenolpyruvate. The Proton acceptor role is filled by aspartate 313. The phosphoenolpyruvate site is built by arginine 344, arginine 386, and lysine 411.

This sequence belongs to the EPSP synthase family. As to quaternary structure, monomer.

The protein resides in the cytoplasm. The enzyme catalyses 3-phosphoshikimate + phosphoenolpyruvate = 5-O-(1-carboxyvinyl)-3-phosphoshikimate + phosphate. Its pathway is metabolic intermediate biosynthesis; chorismate biosynthesis; chorismate from D-erythrose 4-phosphate and phosphoenolpyruvate: step 6/7. Its function is as follows. Catalyzes the transfer of the enolpyruvyl moiety of phosphoenolpyruvate (PEP) to the 5-hydroxyl of shikimate-3-phosphate (S3P) to produce enolpyruvyl shikimate-3-phosphate and inorganic phosphate. The polypeptide is 3-phosphoshikimate 1-carboxyvinyltransferase (Escherichia coli O17:K52:H18 (strain UMN026 / ExPEC)).